The following is a 317-amino-acid chain: tRNA(Met) cytidine acetate ligase (317 aa).

Residues 6–19 (IAEYNPFHNGHIYQ), glycine 100, asparagine 157, and arginine 182 each bind ATP.

It belongs to the TmcAL family.

The protein localises to the cytoplasm. The catalysed reaction is cytidine(34) in elongator tRNA(Met) + acetate + ATP = N(4)-acetylcytidine(34) in elongator tRNA(Met) + AMP + diphosphate. In terms of biological role, catalyzes the formation of N(4)-acetylcytidine (ac(4)C) at the wobble position of elongator tRNA(Met), using acetate and ATP as substrates. First activates an acetate ion to form acetyladenylate (Ac-AMP) and then transfers the acetyl group to tRNA to form ac(4)C34. The protein is tRNA(Met) cytidine acetate ligase of Mesomycoplasma hyopneumoniae (strain 232) (Mycoplasma hyopneumoniae).